A 117-amino-acid polypeptide reads, in one-letter code: UPF0342 protein Bcer98_0695 (117 aa).

It belongs to the UPF0342 family.

The protein is UPF0342 protein Bcer98_0695 of Bacillus cytotoxicus (strain DSM 22905 / CIP 110041 / 391-98 / NVH 391-98).